Here is a 102-residue protein sequence, read N- to C-terminus: Large ribosomal subunit protein uL24 (102 aa).

It belongs to the universal ribosomal protein uL24 family. In terms of assembly, part of the 50S ribosomal subunit.

In terms of biological role, one of two assembly initiator proteins, it binds directly to the 5'-end of the 23S rRNA, where it nucleates assembly of the 50S subunit. Its function is as follows. One of the proteins that surrounds the polypeptide exit tunnel on the outside of the subunit. This chain is Large ribosomal subunit protein uL24, found in Rhizobium etli (strain CIAT 652).